Here is a 102-residue protein sequence, read N- to C-terminus: Cytochrome c oxidase subunit 6a, mitochondrial (102 aa).

Residues 1–36 constitute a mitochondrion transit peptide; the sequence is MATAIVRSALSRAVTRAAPKTSVAPKRNFSSSAGHD.

The protein belongs to the cytochrome c oxidase subunit 6A (TC 3.D.4.11) family.

It is found in the mitochondrion inner membrane. Its function is as follows. This protein is one of the nuclear-coded polypeptide chains of cytochrome c oxidase, the terminal oxidase in mitochondrial electron transport. This is Cytochrome c oxidase subunit 6a, mitochondrial (COX6A) from Arabidopsis thaliana (Mouse-ear cress).